A 510-amino-acid chain; its full sequence is Major facilitator superfamily domain-containing protein 4A (510 aa).

The next 12 membrane-spanning stretches (helical) occupy residues 19–39 (LTYW…GPTL), 53–73 (ISWV…LGGV), 82–102 (LWAL…IPFC), 107–127 (VLAS…TVAN), 139–159 (AFFL…SPLI), 218–238 (YAFW…LFLL), 303–323 (FFAI…MMGA), 345–365 (GYLP…SIPV), 380–400 (VGVV…IFLF), 401–421 (VGTA…LAYT), 434–454 (VLVT…GLIF), and 462–482 (FLVC…LLLF).

Belongs to the major facilitator superfamily.

It localises to the membrane. The chain is Major facilitator superfamily domain-containing protein 4A from Mus musculus (Mouse).